A 54-amino-acid polypeptide reads, in one-letter code: Metallothionein-4 (54 aa).

It belongs to the metallothionein superfamily. Type 11 family.

The polypeptide is Metallothionein-4 (MTP4) (Yarrowia lipolytica (strain CLIB 122 / E 150) (Yeast)).